Consider the following 274-residue polypeptide: NH(3)-dependent NAD(+) synthetase (274 aa).

An ATP-binding site is contributed by 46–53; the sequence is GISGGQDS. Asp52 contributes to the Mg(2+) binding site. Arg140 is a deamido-NAD(+) binding site. Thr160 is a binding site for ATP. Glu165 serves as a coordination point for Mg(2+). Deamido-NAD(+)-binding residues include Lys173 and Asp180. Residues Lys189 and Thr211 each coordinate ATP. A deamido-NAD(+)-binding site is contributed by 260–261; the sequence is HK.

This sequence belongs to the NAD synthetase family. As to quaternary structure, homodimer.

The catalysed reaction is deamido-NAD(+) + NH4(+) + ATP = AMP + diphosphate + NAD(+) + H(+). It functions in the pathway cofactor biosynthesis; NAD(+) biosynthesis; NAD(+) from deamido-NAD(+) (ammonia route): step 1/1. In terms of biological role, catalyzes the ATP-dependent amidation of deamido-NAD to form NAD. Uses ammonia as a nitrogen source. This is NH(3)-dependent NAD(+) synthetase from Streptococcus pyogenes serotype M18 (strain MGAS8232).